The primary structure comprises 216 residues: MOB kinase activator 1A (216 aa).

S2 carries the N-acetylserine modification. Phosphothreonine occurs at positions 12 and 35. The residue at position 74 (T74) is a Phosphothreonine; by STK3/MST2. Zn(2+)-binding residues include C79, C84, H161, and H166. Position 181 is a phosphothreonine (T181).

It belongs to the MOB1/phocein family. In terms of assembly, binds STK38 and STK38L. Interacts with LATS1 and LATS2. Forms a tripartite complex with STK38 and STK3/MST2. Phosphorylated by STK3/MST2 and STK4/MST1 and this phosphorylation enhances its binding to LATS1. As to expression, adrenal gland, bone marrow, brain, placenta, prostate, salivary gland, skeletal muscle, testis, thymus, thyroid gland, heart, spinal cord, fetal brain and fetal liver.

Activator of LATS1/2 in the Hippo signaling pathway which plays a pivotal role in organ size control and tumor suppression by restricting proliferation and promoting apoptosis. The core of this pathway is composed of a kinase cascade wherein STK3/MST2 and STK4/MST1, in complex with its regulatory protein SAV1, phosphorylates and activates LATS1/2 in complex with its regulatory protein MOB1, which in turn phosphorylates and inactivates YAP1 oncoprotein and WWTR1/TAZ. Phosphorylation of YAP1 by LATS1/2 inhibits its translocation into the nucleus to regulate cellular genes important for cell proliferation, cell death, and cell migration. Stimulates the kinase activity of STK38 and STK38L. Acts cooperatively with STK3/MST2 to activate STK38. This chain is MOB kinase activator 1A, found in Homo sapiens (Human).